The following is a 449-amino-acid chain: MLNMESPQMYADAVQTLAQLDLKKEPPLQQATIGQITLTAMSTAQQQQQQQQQQQQQQQQQQQQQQQQPQQQTTDANNNTSQDAALLVKQHAMHQMQQVAALGSNNNLLQKQMLQQYSTQTDLDELTTQEITLDLQHLIDDQFRDTETLGIFSDMVTSPGGLSATLPPSGMVSAAAKVLQQQTLRNQHGYGGRGGGGGAGGALAYMPQPVHATYNNSSDENSSVGSDSSTIKEEPIDPEYRRHLQEAASQQAAFMGNGAGLYNGYGSGANGLTGGGNPLNGGNTTPSSNGSNGSTGSSNGSQFTNLTTANVLAHHNLPHLAAAAGAHNLLKQHSKLHAQQQHQQHQQQQQHRKHSNKHVDKGTDEYRRRRERNNIAVRKSREKAKVRSREVEERVKSLLKEKDALIRQLGEMTNELQLHKQIYMQLMNHANPEVSRVCRSFLNTNEHSL.

Disordered regions lie at residues 211-233 (HATY…TIKE), 276-302 (GNPL…NGSQ), and 334-386 (SKLH…KAKV). Composition is skewed to low complexity over residues 215-229 (NNSS…SDSS), 280-301 (NGGN…SNGS), and 339-349 (QQQHQQHQQQQ). A compositionally biased stretch (basic and acidic residues) spans 357 to 368 (KHVDKGTDEYRR). In terms of domain architecture, bZIP spans 363-426 (TDEYRRRRER…QLHKQIYMQL (64 aa)). Residues 367–396 (RRRRERNNIAVRKSREKAKVRSREVEERVK) are basic motif. A leucine-zipper region spans residues 398–405 (LLKEKDAL).

The protein belongs to the bZIP family. C/EBP subfamily. Binds DNA as a dimer and can form stable heterodimers. Interacts with trbl. Ubiquitination/deubiquitination regulates border cell migration. Ubiquitination is stimulated by trbl, which leads to proteasomal degradation and inhibits border cell migration. Deubiquitination by Usp47, leads to its stabilization and promotes border cell migration.

The protein resides in the nucleus. Required for the expression of gene products mediating border cell migration. Among the DNA sequences that this protein binds with high affinity is a conserved site within the promoter of its gene. The protein is CCAAT/enhancer-binding protein (slbo) of Drosophila melanogaster (Fruit fly).